Consider the following 238-residue polypeptide: Pyridoxine 5'-phosphate synthase (238 aa).

Residues Asn-7 and Arg-18 each contribute to the 3-amino-2-oxopropyl phosphate site. His-43 functions as the Proton acceptor in the catalytic mechanism. 1-deoxy-D-xylulose 5-phosphate contacts are provided by Arg-45 and His-50. The active-site Proton acceptor is Glu-70. Residue Thr-100 participates in 1-deoxy-D-xylulose 5-phosphate binding. The Proton donor role is filled by His-190. 3-amino-2-oxopropyl phosphate is bound by residues Asp-191 and 213 to 214; that span reads GH.

It belongs to the PNP synthase family. Homooctamer; tetramer of dimers.

It is found in the cytoplasm. It catalyses the reaction 3-amino-2-oxopropyl phosphate + 1-deoxy-D-xylulose 5-phosphate = pyridoxine 5'-phosphate + phosphate + 2 H2O + H(+). It functions in the pathway cofactor biosynthesis; pyridoxine 5'-phosphate biosynthesis; pyridoxine 5'-phosphate from D-erythrose 4-phosphate: step 5/5. In terms of biological role, catalyzes the complicated ring closure reaction between the two acyclic compounds 1-deoxy-D-xylulose-5-phosphate (DXP) and 3-amino-2-oxopropyl phosphate (1-amino-acetone-3-phosphate or AAP) to form pyridoxine 5'-phosphate (PNP) and inorganic phosphate. The protein is Pyridoxine 5'-phosphate synthase of Parabacteroides distasonis (strain ATCC 8503 / DSM 20701 / CIP 104284 / JCM 5825 / NCTC 11152).